We begin with the raw amino-acid sequence, 170 residues long: uncharacterized protein (170 aa).

This is an uncharacterized protein from Archaeoglobus fulgidus (strain ATCC 49558 / DSM 4304 / JCM 9628 / NBRC 100126 / VC-16).